A 101-amino-acid polypeptide reads, in one-letter code: Protein Tat (101 aa).

Residues 1 to 12 are compositionally biased toward basic and acidic residues; the sequence is MDPVDPRLEPWK. The interval 1–20 is disordered; the sequence is MDPVDPRLEPWKHPGSQPKA. An interaction with human CREBBP region spans residues 1-24; sequence MDPVDPRLEPWKHPGSQPKAACTS. The tract at residues 1–48 is transactivation; that stretch reads MDPVDPRLEPWKHPGSQPKAACTSCYCKKCCFHCQVCFTTKGLGISYG. Zn(2+) is bound by residues Cys-22, Cys-25, and Cys-27. Positions 22-37 are cysteine-rich; it reads CTSCYCKKCCFHCQVC. Residue Lys-28 is modified to N6-acetyllysine; by host PCAF. Zn(2+) contacts are provided by Cys-30, His-33, Cys-34, and Cys-37. The core stretch occupies residues 38–48; that stretch reads FTTKGLGISYG. Residues 48-57 show a composition bias toward basic residues; the sequence is GRKKRRQRRR. The disordered stretch occupies residues 48–101; it reads GRKKRRQRRRAPQDSQTHQVSLPKQPASQARGDPTGPKESKKKVERETETDPVD. A Nuclear localization signal, RNA-binding (TAR), and protein transduction motif is present at residues 49-57; sequence RKKRRQRRR. Residues 49–86 are interaction with the host capping enzyme RNGTT; sequence RKKRRQRRRAPQDSQTHQVSLPKQPASQARGDPTGPKE. 2 positions are modified to N6-acetyllysine; by host EP300 and GCN5L2: Lys-50 and Lys-51. 2 positions are modified to asymmetric dimethylarginine; by host PRMT6: Arg-52 and Arg-53. Residues 60–75 show a composition bias toward polar residues; it reads QDSQTHQVSLPKQPAS. Lys-71 is covalently cross-linked (Glycyl lysine isopeptide (Lys-Gly) (interchain with G-Cter in ubiquitin)). The short motif at 78-80 is the Cell attachment site element; it reads RGD. A compositionally biased stretch (basic and acidic residues) spans 83 to 101; sequence GPKESKKKVERETETDPVD.

It belongs to the lentiviruses Tat family. Interacts with host CCNT1. Associates with the P-TEFb complex composed at least of Tat, P-TEFb (CDK9 and CCNT1), TAR RNA, RNA Pol II. Recruits the HATs CREBBP, TAF1/TFIID, EP300, PCAF and GCN5L2. Interacts with host KAT5/Tip60; this interaction targets the latter to degradation. Interacts with the host deacetylase SIRT1. Interacts with host capping enzyme RNGTT; this interaction stimulates RNGTT. Binds to host KDR, and to the host integrins ITGAV/ITGB3 and ITGA5/ITGB1. Interacts with host KPNB1/importin beta-1 without previous binding to KPNA1/importin alpha-1. Interacts with EIF2AK2. Interacts with host nucleosome assembly protein NAP1L1; this interaction may be required for the transport of Tat within the nucleus, since the two proteins interact at the nuclear rim. Interacts with host C1QBP/SF2P32; this interaction involves lysine-acetylated Tat. Interacts with the host chemokine receptors CCR2, CCR3 and CXCR4. Interacts with host DPP4/CD26; this interaction may trigger an anti-proliferative effect. Interacts with host LDLR. Interacts with the host extracellular matrix metalloproteinase MMP1. Interacts with host PRMT6; this interaction mediates Tat's methylation. Interacts with, and is ubiquitinated by MDM2/Hdm2. Interacts with host PSMC3 and HTATIP2. Interacts with STAB1; this interaction may overcome SATB1-mediated repression of IL2 and IL2RA (interleukin) in T cells by binding to the same domain than HDAC1. Interacts (when acetylated) with human CDK13, thereby increasing HIV-1 mRNA splicing and promoting the production of the doubly spliced HIV-1 protein Nef. Interacts with host TBP; this interaction modulates the activity of transcriptional pre-initiation complex. Interacts with host RELA. Interacts with host PLSCR1; this interaction negatively regulates Tat transactivation activity by altering its subcellular distribution. Asymmetrical arginine methylation by host PRMT6 seems to diminish the transactivation capacity of Tat and affects the interaction with host CCNT1. Post-translationally, acetylation by EP300, CREBBP, GCN5L2/GCN5 and PCAF regulates the transactivation activity of Tat. EP300-mediated acetylation of Lys-50 promotes dissociation of Tat from the TAR RNA through the competitive binding to PCAF's bromodomain. In addition, the non-acetylated Tat's N-terminus can also interact with PCAF. PCAF-mediated acetylation of Lys-28 enhances Tat's binding to CCNT1. Lys-50 is deacetylated by SIRT1. In terms of processing, polyubiquitination by host MDM2 does not target Tat to degradation, but activates its transactivation function and fosters interaction with CCNT1 and TAR RNA. Phosphorylated by EIF2AK2 on serine and threonine residues adjacent to the basic region important for TAR RNA binding and function. Phosphorylation of Tat by EIF2AK2 is dependent on the prior activation of EIF2AK2 by dsRNA.

Its subcellular location is the host nucleus. The protein localises to the host nucleolus. It is found in the host cytoplasm. It localises to the secreted. Transcriptional activator that increases RNA Pol II processivity, thereby increasing the level of full-length viral transcripts. Recognizes a hairpin structure at the 5'-LTR of the nascent viral mRNAs referred to as the transactivation responsive RNA element (TAR) and recruits the cyclin T1-CDK9 complex (P-TEFb complex) that will in turn hyperphosphorylate the RNA polymerase II to allow efficient elongation. The CDK9 component of P-TEFb and other Tat-activated kinases hyperphosphorylate the C-terminus of RNA Pol II that becomes stabilized and much more processive. Other factors such as HTATSF1/Tat-SF1, SUPT5H/SPT5, and HTATIP2 are also important for Tat's function. Besides its effect on RNA Pol II processivity, Tat induces chromatin remodeling of proviral genes by recruiting the histone acetyltransferases (HATs) CREBBP, EP300 and PCAF to the chromatin. This also contributes to the increase in proviral transcription rate, especially when the provirus integrates in transcriptionally silent region of the host genome. To ensure maximal activation of the LTR, Tat mediates nuclear translocation of NF-kappa-B by interacting with host RELA. Through its interaction with host TBP, Tat may also modulate transcription initiation. Tat can reactivate a latently infected cell by penetrating in it and transactivating its LTR promoter. In the cytoplasm, Tat is thought to act as a translational activator of HIV-1 mRNAs. Functionally, extracellular circulating Tat can be endocytosed by surrounding uninfected cells via the binding to several surface receptors such as CD26, CXCR4, heparan sulfate proteoglycans (HSPG) or LDLR. Neurons are rarely infected, but they internalize Tat via their LDLR. Through its interaction with nuclear HATs, Tat is potentially able to control the acetylation-dependent cellular gene expression. Modulates the expression of many cellular genes involved in cell survival, proliferation or in coding for cytokines or cytokine receptors. Tat plays a role in T-cell and neurons apoptosis. Tat induced neurotoxicity and apoptosis probably contribute to neuroAIDS. Circulating Tat also acts as a chemokine-like and/or growth factor-like molecule that binds to specific receptors on the surface of the cells, affecting many cellular pathways. In the vascular system, Tat binds to ITGAV/ITGB3 and ITGA5/ITGB1 integrins dimers at the surface of endothelial cells and competes with bFGF for heparin-binding sites, leading to an excess of soluble bFGF. The sequence is that of Protein Tat from Homo sapiens (Human).